A 201-amino-acid polypeptide reads, in one-letter code: Protein lin-7 homolog B (201 aa).

Residues 1-13 (MAALVEPLGLERE) carry the Kinase interacting site motif. The L27 domain occupies 10–65 (LEREVSRAVELLERLQRSGELPPQKLQALQRVLQSRFCSAIREVYEQLYDTLDITG). The PDZ domain maps to 93–175 (VVELPKTDEG…SVKLVVRYTP (83 aa)).

The protein belongs to the lin-7 family. As to quaternary structure, forms a complex with CASK and CASKIN1. Component of the brain-specific heterotrimeric complex (LIN-10-LIN-2-LIN-7 complex) composed of at least APBA1, CASK, and LIN7, which associates with the motor protein KIF17 to transport vesicles along microtubules. Forms a heterotrimeric complex composed of MMP5, LIN7B and PATJ; the N-terminal L27 domain of PALS1 interacts with the L27 domain of PATJ and the C-terminal L27 domain of PALS1 interacts with the L27 domain of LIN7B. Forms a heterotrimeric complex with DLG1 and CASK via their L27 domains. Interacts with DLG4 and GRIN2B as well as CDH1 and CTNNB1, the channels KCNJ12/Kir2.2, KCNJ4/Kir2.3 and probably KCNJ2/Kir2.1 and SLC6A12/BGT-1 via its PDZ domain. The association of LIN7A with cadherin and beta-catenin is calcium-dependent, occurs at synaptic junctions and requires the actin cytoskeleton. Interacts with EGFR, ERBB2, ERBB3 and ERBB4 with both PDZ and KID domains. Interacts with ASIC3. Interacts with TOPK. Interacts with RTKN. Associates with KIF17 via APBA1. Interacts with APBA1. Interacts with MPP7. Interacts with DLG2. Interacts with DLG3.

It is found in the cell membrane. The protein localises to the basolateral cell membrane. Its subcellular location is the cell junction. It localises to the postsynaptic density membrane. The protein resides in the tight junction. Plays a role in establishing and maintaining the asymmetric distribution of channels and receptors at the plasma membrane of polarized cells. Forms membrane-associated multiprotein complexes that may regulate delivery and recycling of proteins to the correct membrane domains. The tripartite complex composed of LIN7 (LIN7A, LIN7B or LIN7C), CASK and APBA1 associates with the motor protein KIF17 to transport vesicles containing N-methyl-D-aspartate (NMDA) receptor subunit NR2B along microtubules. This complex may have the potential to couple synaptic vesicle exocytosis to cell adhesion in brain. Ensures the proper localization of GRIN2B (subunit 2B of the NMDA receptor) to neuronal postsynaptic density and may function in localizing synaptic vesicles at synapses where it is recruited by beta-catenin and cadherin. Required to localize Kir2 channels, GABA transporter (SLC6A12) and EGFR/ERBB1, ERBB2, ERBB3 and ERBB4 to the basolateral membrane of epithelial cells. May increase the amplitude of ASIC3 acid-evoked currents by stabilizing the channel at the cell surface. The sequence is that of Protein lin-7 homolog B (LIN7B) from Bos taurus (Bovine).